Here is a 130-residue protein sequence, read N- to C-terminus: Ribosome-binding factor A (130 aa).

This sequence belongs to the RbfA family. Monomer. Binds 30S ribosomal subunits, but not 50S ribosomal subunits or 70S ribosomes.

The protein localises to the cytoplasm. Its function is as follows. One of several proteins that assist in the late maturation steps of the functional core of the 30S ribosomal subunit. Associates with free 30S ribosomal subunits (but not with 30S subunits that are part of 70S ribosomes or polysomes). Required for efficient processing of 16S rRNA. May interact with the 5'-terminal helix region of 16S rRNA. This chain is Ribosome-binding factor A, found in Roseiflexus castenholzii (strain DSM 13941 / HLO8).